The chain runs to 145 residues: HTH-type transcriptional regulator MhqR (145 aa).

An HTH marR-type domain is found at 5–137 (SLKLFIVLSR…CTEMLKRVGL (133 aa)). Positions 51-74 (LQQIGDKILLASGSITYVVDKLEQ) form a DNA-binding region, H-T-H motif.

In terms of biological role, negatively regulates mhqA, mhqED, mhqNOP, and azoR2 which may contribute to the degradation of aromatic compounds. In Bacillus subtilis (strain 168), this protein is HTH-type transcriptional regulator MhqR (mhqR).